The primary structure comprises 203 residues: 8-oxoguanine DNA glycosylase/AP lyase (203 aa).

Catalysis depends on residues Lys-128 and Asp-146.

The protein belongs to the type-2 OGG1 family.

The enzyme catalyses 2'-deoxyribonucleotide-(2'-deoxyribose 5'-phosphate)-2'-deoxyribonucleotide-DNA = a 3'-end 2'-deoxyribonucleotide-(2,3-dehydro-2,3-deoxyribose 5'-phosphate)-DNA + a 5'-end 5'-phospho-2'-deoxyribonucleoside-DNA + H(+). Its function is as follows. Catalyzes the excision of an oxidatively damaged form of guanine (7,8-dihydro-8-oxoguanine = 8-oxoG) from DNA. Also cleaves the DNA backbone at apurinic/apyrimidinic sites (AP sites). The polypeptide is 8-oxoguanine DNA glycosylase/AP lyase (Sulfolobus acidocaldarius (strain ATCC 33909 / DSM 639 / JCM 8929 / NBRC 15157 / NCIMB 11770)).